Here is a 262-residue protein sequence, read N- to C-terminus: Deaminated glutathione amidase (262 aa).

Residues 1-238 form the CN hydrolase domain; that stretch reads MLVAAGQFAV…PALIMAEVTP (238 aa). Glutamate 40 functions as the Proton acceptor in the catalytic mechanism. Catalysis depends on lysine 110, which acts as the Proton donor. Cysteine 147 serves as the catalytic Nucleophile.

Belongs to the carbon-nitrogen hydrolase superfamily. NIT1/NIT2 family.

The catalysed reaction is N-(4-oxoglutaryl)-L-cysteinylglycine + H2O = L-cysteinylglycine + 2-oxoglutarate. Functionally, hydrolyzes deaminated glutathione (dGSH) to 2-oxoglutarate and L-cysteinylglycine, and no activity on glutathione or L-glutamine. May function as a metabolite repair enzyme. The chain is Deaminated glutathione amidase (ybeM) from Escherichia coli O157:H7.